Here is a 460-residue protein sequence, read N- to C-terminus: Serine--tRNA ligase (460 aa).

255–257 contacts L-serine; it reads TAE. ATP is bound by residues 286-288 and Val302; that span reads RKE. Position 309 (Glu309) interacts with L-serine. Position 373–376 (373–376) interacts with ATP; that stretch reads EMVS. Thr409 contacts L-serine.

It belongs to the class-II aminoacyl-tRNA synthetase family. Type-1 seryl-tRNA synthetase subfamily. As to quaternary structure, homodimer. The tRNA molecule binds across the dimer.

It localises to the cytoplasm. It carries out the reaction tRNA(Ser) + L-serine + ATP = L-seryl-tRNA(Ser) + AMP + diphosphate + H(+). The catalysed reaction is tRNA(Sec) + L-serine + ATP = L-seryl-tRNA(Sec) + AMP + diphosphate + H(+). It functions in the pathway aminoacyl-tRNA biosynthesis; selenocysteinyl-tRNA(Sec) biosynthesis; L-seryl-tRNA(Sec) from L-serine and tRNA(Sec): step 1/1. Functionally, catalyzes the attachment of serine to tRNA(Ser). Is also able to aminoacylate tRNA(Sec) with serine, to form the misacylated tRNA L-seryl-tRNA(Sec), which will be further converted into selenocysteinyl-tRNA(Sec). The sequence is that of Serine--tRNA ligase from Aeropyrum pernix (strain ATCC 700893 / DSM 11879 / JCM 9820 / NBRC 100138 / K1).